A 375-amino-acid chain; its full sequence is Enoyl-[acyl-carrier-protein] reductase [NADH] 1, chloroplastic (375 aa).

Residues 1–67 (MGASAATGMQ…SSKRSGVAIR (67 aa)) constitute a chloroplast transit peptide. Residues Gly91, Tyr98, 155-156 (DA), 202-203 (SL), and Leu252 each bind NAD(+). Active-site proton acceptor residues include Tyr254 and Tyr264. NAD(+) contacts are provided by residues Lys272 and 302 to 306 (LGSRA).

Belongs to the short-chain dehydrogenases/reductases (SDR) family. FabI subfamily. In terms of assembly, homotetramer.

Its subcellular location is the plastid. It is found in the chloroplast. The enzyme catalyses a 2,3-saturated acyl-[ACP] + NAD(+) = a (2E)-enoyl-[ACP] + NADH + H(+). It functions in the pathway lipid metabolism; fatty acid biosynthesis. Its function is as follows. Catalyzes the NAD-dependent reduction of a carbon-carbon double bond in an enoyl moiety that is covalently linked to an acyl carrier protein (ACP). Catalyzes the last reduction step in the de novo synthesis cycle of fatty acids. Involved in the elongation cycle of fatty acids which are used in lipid metabolism. Required for normal plant growth. In Oryza sativa subsp. japonica (Rice), this protein is Enoyl-[acyl-carrier-protein] reductase [NADH] 1, chloroplastic.